Reading from the N-terminus, the 763-residue chain is Thiamine biosynthesis multifunctional protein ThiED (763 aa).

Residues 1–210 form a thiamine-phosphate synthase region; the sequence is MTDFSLYLVT…ANPAAAATRL (210 aa). 4-amino-2-methyl-5-(diphosphooxymethyl)pyrimidine-binding positions include 37-41 and Asn69; that span reads QLRDK. Mg(2+)-binding residues include Asp70 and Asp88. A 4-amino-2-methyl-5-(diphosphooxymethyl)pyrimidine-binding site is contributed by Ser107. 140–142 serves as a coordination point for 2-[(2R,5Z)-2-carboxy-4-methylthiazol-5(2H)-ylidene]ethyl phosphate; sequence TAT. Lys143 lines the 4-amino-2-methyl-5-(diphosphooxymethyl)pyrimidine pocket. Residues Gly174 and 194-195 contribute to the 2-[(2R,5Z)-2-carboxy-4-methylthiazol-5(2H)-ylidene]ethyl phosphate site; that span reads VS. Positions 245-500 are hydroxymethylpyrimidine/phosphomethylpyrimidine kinase; the sequence is LSIAGTDPTG…GTGNGPVDHG (256 aa). A 4-amino-5-hydroxymethyl-2-methylpyrimidine-binding site is contributed by Gln282. Positions 550–763 are thiaminase-2; the sequence is FTRALWEASG…RHGWTMVGSS (214 aa).

It in the N-terminal section; belongs to the thiamine-phosphate synthase family. In the central section; belongs to the ThiD family. The protein in the C-terminal section; belongs to the thiaminase-2 family. It depends on Mg(2+) as a cofactor.

The catalysed reaction is 2-[(2R,5Z)-2-carboxy-4-methylthiazol-5(2H)-ylidene]ethyl phosphate + 4-amino-2-methyl-5-(diphosphooxymethyl)pyrimidine + 2 H(+) = thiamine phosphate + CO2 + diphosphate. It carries out the reaction 2-(2-carboxy-4-methylthiazol-5-yl)ethyl phosphate + 4-amino-2-methyl-5-(diphosphooxymethyl)pyrimidine + 2 H(+) = thiamine phosphate + CO2 + diphosphate. The enzyme catalyses 4-methyl-5-(2-phosphooxyethyl)-thiazole + 4-amino-2-methyl-5-(diphosphooxymethyl)pyrimidine + H(+) = thiamine phosphate + diphosphate. It catalyses the reaction 4-amino-5-hydroxymethyl-2-methylpyrimidine + ATP = 4-amino-2-methyl-5-(phosphooxymethyl)pyrimidine + ADP + H(+). The catalysed reaction is 4-amino-2-methyl-5-(phosphooxymethyl)pyrimidine + ATP = 4-amino-2-methyl-5-(diphosphooxymethyl)pyrimidine + ADP. It functions in the pathway cofactor biosynthesis; thiamine diphosphate biosynthesis; 4-amino-2-methyl-5-diphosphomethylpyrimidine from 5-amino-1-(5-phospho-D-ribosyl)imidazole: step 3/3. It participates in cofactor biosynthesis; thiamine diphosphate biosynthesis; thiamine phosphate from 4-amino-2-methyl-5-diphosphomethylpyrimidine and 4-methyl-5-(2-phosphoethyl)-thiazole: step 1/1. Condenses 4-methyl-5-(beta-hydroxyethyl)thiazole monophosphate (THZ-P) and 2-methyl-4-amino-5-hydroxymethyl pyrimidine pyrophosphate (HMP-PP) to form thiamine monophosphate (TMP). In terms of biological role, catalyzes the phosphorylation of hydroxymethylpyrimidine phosphate (HMP-P) to HMP-PP, and of HMP to HMP-P. The polypeptide is Thiamine biosynthesis multifunctional protein ThiED (theD) (Corynebacterium glutamicum (strain ATCC 13032 / DSM 20300 / JCM 1318 / BCRC 11384 / CCUG 27702 / LMG 3730 / NBRC 12168 / NCIMB 10025 / NRRL B-2784 / 534)).